The chain runs to 105 residues: Met repressor (105 aa).

The protein belongs to the MetJ family. As to quaternary structure, homodimer.

It localises to the cytoplasm. Its function is as follows. This regulatory protein, when combined with SAM (S-adenosylmethionine) represses the expression of the methionine regulon and of enzymes involved in SAM synthesis. The protein is Met repressor of Haemophilus ducreyi (strain 35000HP / ATCC 700724).